The following is a 684-amino-acid chain: Acetyl-coenzyme A synthetase 2 (684 aa).

CoA-binding positions include 207 to 210 and threonine 326; that span reads RGGK. ATP-binding positions include 402 to 404, 426 to 431, aspartate 517, and arginine 532; these read GEP and DTMWQT. Serine 540 is a CoA binding site. Arginine 543 serves as a coordination point for ATP. Arginine 613 serves as a coordination point for CoA.

It belongs to the ATP-dependent AMP-binding enzyme family.

It catalyses the reaction acetate + ATP + CoA = acetyl-CoA + AMP + diphosphate. In Kluyveromyces lactis (strain ATCC 8585 / CBS 2359 / DSM 70799 / NBRC 1267 / NRRL Y-1140 / WM37) (Yeast), this protein is Acetyl-coenzyme A synthetase 2 (ACS2).